Consider the following 66-residue polypeptide: Toxin Boma6c (66 aa).

Residues 2 to 64 form the LCN-type CS-alpha/beta domain; the sequence is RDAYIAQNYN…VPIRIPGKCH (63 aa). 4 disulfides stabilise this stretch: cysteine 12–cysteine 63, cysteine 16–cysteine 36, cysteine 22–cysteine 46, and cysteine 26–cysteine 48.

This sequence belongs to the long (4 C-C) scorpion toxin superfamily. Sodium channel inhibitor family. Alpha subfamily. Expressed by the venom gland.

The protein localises to the secreted. In terms of biological role, alpha toxins bind voltage-independently at site-3 of sodium channels (Nav) and inhibit the inactivation of the activated channels, thereby blocking neuronal transmission. The polypeptide is Toxin Boma6c (Buthus occitanus mardochei (Moroccan scorpion)).